We begin with the raw amino-acid sequence, 261 residues long: tRNA pseudouridine synthase A (261 aa).

D51 (nucleophile) is an active-site residue. A substrate-binding site is contributed by Y109.

It belongs to the tRNA pseudouridine synthase TruA family. In terms of assembly, homodimer.

It carries out the reaction uridine(38/39/40) in tRNA = pseudouridine(38/39/40) in tRNA. In terms of biological role, formation of pseudouridine at positions 38, 39 and 40 in the anticodon stem and loop of transfer RNAs. The protein is tRNA pseudouridine synthase A of Shewanella sp. (strain ANA-3).